A 320-amino-acid polypeptide reads, in one-letter code: Cytochrome f (320 aa).

The first 35 residues, M1–A35, serve as a signal peptide directing secretion. Heme is bound by residues Y36, C56, C59, and H60. A helical membrane pass occupies residues I286–K306.

The protein belongs to the cytochrome f family. The 4 large subunits of the cytochrome b6-f complex are cytochrome b6, subunit IV (17 kDa polypeptide, petD), cytochrome f and the Rieske protein, while the 4 small subunits are PetG, PetL, PetM and PetN. The complex functions as a dimer. It depends on heme as a cofactor.

It is found in the plastid. The protein resides in the chloroplast thylakoid membrane. In terms of biological role, component of the cytochrome b6-f complex, which mediates electron transfer between photosystem II (PSII) and photosystem I (PSI), cyclic electron flow around PSI, and state transitions. The polypeptide is Cytochrome f (Dioscorea elephantipes (Elephant's foot yam)).